The following is a 360-amino-acid chain: Putative F-box protein At3g47150 (360 aa).

The region spanning 6–56 is the F-box domain; that stretch reads NTTQIYIPLDLQINILLRLPVKSLLRFRCVSKLWCSIITSHDFRNRHFNIT.

The sequence is that of Putative F-box protein At3g47150 from Arabidopsis thaliana (Mouse-ear cress).